The following is a 665-amino-acid chain: GRB2-associated-binding protein 2 (665 aa).

Residue Ser2 is modified to Phosphoserine. Residues 8–119 (DVVCTGWLRK…WVQSICQICG (112 aa)) form the PH domain. The interval 131–183 (RNLSSASHGPRSSPAEFSSSQHLLRERKSSAPSHSSQPTLFTFEPPMTSHMQP) is disordered. Phosphoserine occurs at positions 135, 142, 143, 149, 150, 160, 165, 211, 220, and 261. The span at 160-170 (SAPSHSSQPTL) shows a compositional bias: polar residues. Residue Thr262 is modified to Phosphothreonine. Tyr263 carries the post-translational modification Phosphotyrosine. Thr275 carries the phosphothreonine modification. Phosphoserine occurs at positions 278 and 282. Thr284 is subject to Phosphothreonine. Phosphotyrosine is present on Tyr290. A Phosphothreonine modification is found at Thr328. 2 disordered regions span residues 340-442 (TSGD…ENYV) and 491-517 (PSRGSEIQPPPVNRNLKPDRKAKPTPL). The SH3-binding signature appears at 348-355 (PPPRPPKP). Ser365 bears the Phosphoserine mark. Phosphothreonine occurs at positions 382 and 388. At Ser402 the chain carries Phosphoserine. Thr405 is subject to Phosphothreonine. Positions 412–423 (GSGESASWSAES) are enriched in low complexity. Residues Ser420 and Ser423 each carry the phosphoserine modification. Residue Tyr441 is modified to Phosphotyrosine. The SH3-binding motif lies at 499–508 (PPPVNRNLKP). Residue Ser532 is modified to Phosphoserine. Polar residues-rich tracts occupy residues 548–566 (SSSQYCRPISTQSITSTDS) and 578–600 (NPVSASPVPSGTNSPAPRKSTGS). The disordered stretch occupies residues 548-631 (SSSQYCRPIS…SSVTSDEKVD (84 aa)). A Phosphoserine modification is found at Ser612. Tyr632 carries the post-translational modification Phosphotyrosine. Over residues 646–659 (TMQEWTDVRQSSEP) the composition is skewed to polar residues. The interval 646–665 (TMQEWTDVRQSSEPSKGAKL) is disordered.

This sequence belongs to the GAB family. Part of a complex composed of EEIG1, TNFRSF11A/RANK, PLCG2, GAB2, TEC and BTK; complex formation increases in the presence of TNFSF11/RANKL. Interacts with HCK. Interacts with SHC1; may mediate interaction with receptors. Interacts with SYK. Interacts with PI-3 kinase. Interacts with GRB2 (via SH3 2 domain). Interacts (phosphorylated) with PTPN11. Interacts with TNFRSF11A (via cytoplasmic domain). Interacts (phosphorylated) with 14-3-3 family proteins SFN, YWHAB, YWHAE, YWHAG, YWHAH, YWHAQ and YWHAZ; prevents interaction with GRB2 and attenuates GAB2 signaling. In terms of processing, phosphorylated upon EGF stimulation. Phosphorylated on tyrosine residues by HCK upon IL6 signaling. Phosphorylated on tyrosine residue(s) by the thrombopoietin receptor (TPOR), stem cell factor receptor (SCFR), and T-cell and B-cell antigen receptors, gp130, IL-2R and IL-3R. Phosphorylated upon stimulation of TNFRSF11A/RANK by TNFSF11/RANKL. Dephosphorylated by PTPN11.

The protein localises to the cytoplasm. The protein resides in the cell membrane. Its subcellular location is the membrane raft. Functionally, adapter protein which acts downstream of several membrane receptors including cytokine, antigen, hormone, cell matrix and growth factor receptors to regulate multiple signaling pathways. Regulates osteoclast differentiation mediating the TNFRSF11A/RANK signaling. In allergic response, it plays a role in mast cells activation and degranulation through PI-3-kinase regulation. Also involved in the regulation of cell proliferation and hematopoiesis. The sequence is that of GRB2-associated-binding protein 2 (Gab2) from Rattus norvegicus (Rat).